The sequence spans 410 residues: MITHNFNTLDLLTSPVWIVSPFEEQLIYANSAAKLLMQDLTFSQLRTGPYSVSSQKELPKYLSDLQNQHDIIEILTVQRKEEETALSCRLVLRKLTETEPVIIFEGIEAPATLGLKASRSANYQRKKQGFYARFFLTNSAPMLLIDPSRDGQIVDANLAALNFYGYNHETMCQKHTWEINMLGRRVMPIMHEISHLPGGHKPLNFVHKLADGSTRHVQTYAGPIEIYGDKLMLCIVHDITEQKRLEEQLEHAAHHDAMTGLLNRRQFYHITEPGQMQHLAIAQDYSLLLIDTDRFKHINDLYGHSKGDEVLCALARTLESCARKGDLVFRWGGEEFVLLLPRTPLDTALSLAETIRVSVAKVSISGLPRFTVSIGVAHHEGNESIDELFKRVDDALYRAKNDGRNRVLAA.

2 consecutive PAS domains span residues 3–70 (THNF…NQHD) and 129–198 (GFYA…HLPG). The region spanning 199-251 (GHKPLNFVHKLADGSTRHVQTYAGPIEIYGDKLMLCIVHDITEQKRLEEQLEH) is the PAC domain. A GGDEF domain is found at 283–410 (QDYSLLLIDT…NDGRNRVLAA (128 aa)). Residue Asp-291 coordinates Mg(2+). Residues Asn-299, His-304, and Asp-308 each contribute to the substrate site. Glu-334 serves as a coordination point for Mg(2+). Glu-334 functions as the Proton acceptor in the catalytic mechanism.

As to quaternary structure, forms homodimers and homotetramers. Interacts with PdeR and MlrA. Mg(2+) serves as cofactor.

It carries out the reaction 2 GTP = 3',3'-c-di-GMP + 2 diphosphate. It functions in the pathway purine metabolism; 3',5'-cyclic di-GMP biosynthesis. With respect to regulation, activity is inhibited by the phosphodiesterase PdeR. Inhibition is relieved by high cellular c-di-GMP levels. Functionally, part of a signaling cascade that regulates curli biosynthesis. The cascade is composed of two cyclic-di-GMP (c-di-GMP) control modules, in which c-di-GMP controlled by the DgcE/PdeH pair (module I) regulates the activity of the DgcM/PdeR pair (module II), which in turn regulates activity of the transcription factor MlrA and expression of the master biofilm regulator csgD. DgcM stimulates activity of MlrA by direct interaction, leading to the transcription of csgD. It also catalyzes the synthesis of c-di-GMP via the condensation of 2 GTP molecules, which contributes to the c-di-GMP pool generated by module I in a positive feedback loop. Production of c-di-GMP contributes to but is not essential for MlrA activation. The protein is Diguanylate cyclase DgcM of Escherichia coli (strain K12).